The sequence spans 945 residues: Kinesin-like protein KIN-UA (945 aa).

Residues 1 to 54 (MAANGRASVRPVERHGAPPRPAGRSRSVAPPSRRPSPSPSRARPAAADNDGGSD) form a disordered region. Residues 22 to 31 (AGRSRSVAPP) are compositionally biased toward low complexity. The Kinesin motor domain maps to 57-399 (RVRVAVRLRP…IMFGQRAMKI (343 aa)). Residue 142 to 149 (GQTGTGKT) coordinates ATP. Positions 369 to 377 (RTSLIVTIG) match the D-BOX motif. The stretch at 415-644 (YKKVEHEVDH…ILRLKQSLAD (230 aa)) forms a coiled coil. ARM repeat units lie at residues 683–722 (RSNI…NLAA), 724–764 (DVNQ…NLAM), 766–806 (GSNQ…NLCG), and 808–847 (EKLH…NFAK).

The protein belongs to the TRAFAC class myosin-kinesin ATPase superfamily. Kinesin family. Ungrouped subfamily.

The protein resides in the cytoplasm. It localises to the cytoskeleton. This chain is Kinesin-like protein KIN-UA, found in Oryza sativa subsp. japonica (Rice).